We begin with the raw amino-acid sequence, 1155 residues long: ATP-dependent helicase/deoxyribonuclease subunit B (1155 aa).

The UvrD-like helicase ATP-binding domain occupies 1 to 300; sequence MSLRFIVGRA…AHLEKYYFRH (300 aa). 8–15 contributes to the ATP binding site; it reads GRAGSGKS. One can recognise a UvrD-like helicase C-terminal domain in the interval 280–590; sequence TPVRFQKDSA…VVGTLERSRN (311 aa). Residues Cys-792, Cys-1111, Cys-1114, and Cys-1120 each coordinate [4Fe-4S] cluster.

The protein belongs to the helicase family. AddB/RexB type 1 subfamily. Heterodimer of AddA and AddB. Mg(2+) serves as cofactor. It depends on [4Fe-4S] cluster as a cofactor.

Its function is as follows. The heterodimer acts as both an ATP-dependent DNA helicase and an ATP-dependent, dual-direction single-stranded exonuclease. Recognizes the chi site generating a DNA molecule suitable for the initiation of homologous recombination. The AddB subunit has 5' -&gt; 3' nuclease activity but not helicase activity. In Desulforamulus reducens (strain ATCC BAA-1160 / DSM 100696 / MI-1) (Desulfotomaculum reducens), this protein is ATP-dependent helicase/deoxyribonuclease subunit B.